The following is a 331-amino-acid chain: Sulfate/thiosulfate import ATP-binding protein CysA (331 aa).

The ABC transporter domain maps to 2 to 232 (ITVTNARKNY…PANEFVMSFL (231 aa)). 34–41 (GPSGSGKS) contacts ATP.

This sequence belongs to the ABC transporter superfamily. Sulfate/tungstate importer (TC 3.A.1.6) family. As to quaternary structure, the complex is composed of two ATP-binding proteins (CysA), two transmembrane proteins (CysT and CysW) and a solute-binding protein (CysP).

It localises to the cell membrane. It carries out the reaction sulfate(out) + ATP + H2O = sulfate(in) + ADP + phosphate + H(+). The enzyme catalyses thiosulfate(out) + ATP + H2O = thiosulfate(in) + ADP + phosphate + H(+). Functionally, part of the ABC transporter complex CysAWTP involved in sulfate/thiosulfate import. Responsible for energy coupling to the transport system. This chain is Sulfate/thiosulfate import ATP-binding protein CysA, found in Nocardia farcinica (strain IFM 10152).